The sequence spans 60 residues: Large ribosomal subunit protein bL32 (60 aa).

Belongs to the bacterial ribosomal protein bL32 family.

The chain is Large ribosomal subunit protein bL32 from Ehrlichia ruminantium (strain Gardel).